The chain runs to 178 residues: Transmembrane protein 196 (178 aa).

Helical transmembrane passes span 11 to 31 (LLVLSVLEIGLGVSSVAVGAV), 47 to 67 (SSPVWSGVCFLLCGICGILCA), 73 to 93 (LVMILFSACCICGLIGGILNF), and 106 to 126 (LYPLHLASMSLACIGIGGCTL).

In terms of tissue distribution, expression is significantly decreased in lung cancer cells compared to normal lung tissue (at protein level).

The protein localises to the cytoplasm. It is found in the membrane. In terms of biological role, acts as a tumor suppressor in lung cancer. Inhibits tumor cell growth by inhibiting cell proliferation and migration and promoting cell apoptosis. Inhibits metastasis of lung cancer by suppressing beta-catenin expression in the Wnt/beta-catenin signaling pathway. This chain is Transmembrane protein 196 (TMEM196), found in Homo sapiens (Human).